A 1076-amino-acid chain; its full sequence is Protein EXPORTIN 1B (1076 aa).

The Importin N-terminal domain maps to 37 to 103 (ADNILRDLKA…KNYISDVIVQ (67 aa)). HEAT repeat units lie at residues 135 to 171 (AKWK…EVFD), 232 to 267 (IFES…LNFG), 282 to 319 (MNQL…FFTS), 475 to 514 (DTEK…SMVV), 564 to 601 (KFLK…KCKR), 613 to 650 (PFVS…AESD), 683 to 720 (LKEP…IFLD), 757 to 794 (REIL…DYAR), 799 to 836 (ARES…CTLE), 895 to 935 (ETGL…VLTD), and 943 to 988 (KLHV…YTTK).

This sequence belongs to the exportin family. As to expression, present in mature pollen grains, unpollinated pistils, and 2-week-old seedlings.

The protein localises to the nucleus. The protein resides in the nuclear pore complex. Its subcellular location is the nucleus membrane. Receptor for the leucine-rich nuclear export signal (NES). Binds cooperatively to the NES on its target protein and to the small GTPase Ran in its active GTP-bound form. Required for the maternal-to-embryonic transition and during gametophyte development. The protein is Protein EXPORTIN 1B of Arabidopsis thaliana (Mouse-ear cress).